The primary structure comprises 221 residues: Response regulator protein PmrA (221 aa).

The Response regulatory domain occupies 2-116 (RILLAEDDLL…ELQARVRALT (115 aa)). Asp-51 is modified (4-aspartylphosphate). A DNA-binding region (ompR/PhoB-type) is located at residues 124-218 (LPQLVHGELR…VRGIGYGIDQ (95 aa)).

Its subcellular location is the cytoplasm. Its function is as follows. Member of the two-component regulatory system PmrA/PmrB that plays a role in the regulation of resistance towards polymyxin B and cationic antimicrobial peptides in response to limiting concentrations of Mg(2+). Functions as a transcriptional activator by direct binding to a cis-acting sequence upstream of the target gene promoters including lipase lipA and pmrH promoters. Also autoregulates its own pmrAB operon under Mg(2+)-limiting conditions. This chain is Response regulator protein PmrA (pmrA), found in Pseudomonas aeruginosa (strain ATCC 15692 / DSM 22644 / CIP 104116 / JCM 14847 / LMG 12228 / 1C / PRS 101 / PAO1).